A 375-amino-acid polypeptide reads, in one-letter code: MSSSLRPGPSRWRRAASIVLAAGWSRPETATPPSRPPPAEGFRLLLLQRSPHQGFMPGAHVFSGGVLDAADRSADWLGLFAPHHGPPRFGLGPAPFSRTAFPSLPDTDDHKTDNTGTLPEDVAFRICAVREAFEEAGVLLLRPRTSPPGPAPGPGLALEPPPGLASWRDRVRQDPRHFLRLCAHLDCTPDIWALHNWSAWLTPFLRGTTRRFDTAFFLCCLREPPPVYPDLAEVVGYQWSSPSEATESFLSKEIWLPPPQFYEVRRLANFASLSDLHKFCLGRALEGLERWLPIILLTADGMVHLLPGDELYLEDSDFLENLMSTEKKTEEIMKEGKQFHRIVTYHRHLYDIHVTVQPKYKHVYPKNSVVRKSHL.

The region spanning 15 to 263 is the Nudix hydrolase domain; sequence AASIVLAAGW…IWLPPPQFYE (249 aa). Positions 91-116 are disordered; it reads LGPAPFSRTAFPSLPDTDDHKTDNTG. Positions 116-137 match the Nudix box motif; that stretch reads GTLPEDVAFRICAVREAFEEAG. Residues glutamate 131 and glutamate 135 each coordinate Mg(2+). Residues 373-375 carry the Microbody targeting signal motif; it reads SHL.

The protein belongs to the Nudix hydrolase family. Monomer. Mg(2+) serves as cofactor. Mn(2+) is required as a cofactor.

It localises to the peroxisome. It carries out the reaction an acyl-CoA + H2O = an acyl-4'-phosphopantetheine + adenosine 3',5'-bisphosphate + 2 H(+). The catalysed reaction is CoA + H2O = (R)-4'-phosphopantetheine + adenosine 3',5'-bisphosphate + 2 H(+). It catalyses the reaction hexanoyl-CoA + H2O = hexanoyl-4'-phosphopantetheine + adenosine 3',5'-bisphosphate + 2 H(+). The enzyme catalyses octanoyl-CoA + H2O = S-octanoyl-4'-phosphopantetheine + adenosine 3',5'-bisphosphate + 2 H(+). It carries out the reaction butanoyl-CoA + H2O = S-butanoyl-4'-phosphopantetheine + adenosine 3',5'-bisphosphate + 2 H(+). The catalysed reaction is propanoyl-CoA + H2O = propanoyl-4'-phosphopantetheine + adenosine 3',5'-bisphosphate + 2 H(+). It catalyses the reaction malonyl-CoA + H2O = malonyl-4'-phosphopantetheine + adenosine 3',5'-bisphosphate + 2 H(+). The enzyme catalyses succinyl-CoA + H2O = succinyl-4'-phosphopantetheine + adenosine 3',5'-bisphosphate + 2 H(+). It carries out the reaction choloyl-CoA + H2O = S-choloyl-4'-phosphopantetheine + adenosine 3',5'-bisphosphate + 2 H(+). The catalysed reaction is 4,8-dimethylnonanoyl-CoA + H2O = S-(4,8-dimethylnonanoyl)-4'-phosphopantetheine + adenosine 3',5'-bisphosphate + 2 H(+). It catalyses the reaction (9Z,12Z,15Z)-octadecatrienoyl-CoA + H2O = S-(9Z,12Z,15Z-octadecatrienoyl)-4'-phosphopantetheine + adenosine 3',5'-bisphosphate + 2 H(+). The enzyme catalyses (9Z,12Z)-octadecadienoyl-CoA + H2O = S-(9Z,12Z-octadecadienoyl)-4'-phosphopantetheine + adenosine 3',5'-bisphosphate + 2 H(+). It carries out the reaction (9Z)-hexadecenoyl-CoA + H2O = S-(9Z-hexadecenoyl)-4'-phosphopantetheine + adenosine 3',5'-bisphosphate + 2 H(+). The catalysed reaction is (9Z)-tetradecenoyl-CoA + H2O = S-(9Z-tetradecenoyl)-4'-phosphopantetheine + adenosine 3',5'-bisphosphate + 2 H(+). It catalyses the reaction (6Z)-octenoyl-CoA + H2O = S-(6Z-octenoyl)-4'-phosphopantetheine + adenosine 3',5'-bisphosphate + 2 H(+). The enzyme catalyses hexadecanoyl-CoA + H2O = S-hexadecanoyl-4'-phosphopantetheine + adenosine 3',5'-bisphosphate + 2 H(+). It carries out the reaction tetradecanoyl-CoA + H2O = tetradecanoyl-4'-phosphopantetheine + adenosine 3',5'-bisphosphate + 2 H(+). The catalysed reaction is dodecanoyl-CoA + H2O = S-dodecanoyl-4'-phosphopantetheine + adenosine 3',5'-bisphosphate + 2 H(+). It catalyses the reaction a 5'-end CoA-ribonucleoside in mRNA + H2O = a 5'-end phospho-adenosine-phospho-ribonucleoside in mRNA + (R)-4'-phosphopantetheine + 2 H(+). Functionally, fatty acyl-coenzyme A (CoA) diphosphatase that hydrolyzes fatty acyl-CoA to yield acyl-4'-phosphopantetheine and adenosine 3',5'-bisphosphate. Mediates the hydrolysis of a wide range of CoA esters, including choloyl-CoA and branched-chain fatty-acyl-CoA esters and at low substrate concentrations medium and long-chain fatty-acyl-CoA esters are the primary substrates. Highest activity seen with medium-chain acyl-CoA esters and higher rates of activity seen with the unsaturated acyl-CoA esters compared with the saturated esters. Exhibits decapping activity towards dpCoA-capped RNAs in vitro. This Homo sapiens (Human) protein is Acyl-coenzyme A diphosphatase NUDT19 (NUDT19).